The sequence spans 592 residues: Pyruvate decarboxylase 3 (592 aa).

2 residues coordinate substrate: D54 and H141. The interval 419–501 is thiamine pyrophosphate binding; that stretch reads DSWFNCQKLK…FLINNGGYTI (83 aa). Mg(2+)-binding residues include D469, N496, and G498. Position 502 (E502) interacts with substrate.

Belongs to the TPP enzyme family. Homotetramer. A metal cation serves as cofactor. It depends on thiamine diphosphate as a cofactor. As to expression, expressed at low levels in roots and shoots.

The enzyme catalyses a 2-oxocarboxylate + H(+) = an aldehyde + CO2. In Arabidopsis thaliana (Mouse-ear cress), this protein is Pyruvate decarboxylase 3 (PDC3).